Here is a 131-residue protein sequence, read N- to C-terminus: Large ribosomal subunit protein bL17 (131 aa).

Belongs to the bacterial ribosomal protein bL17 family. As to quaternary structure, part of the 50S ribosomal subunit. Contacts protein L32.

This is Large ribosomal subunit protein bL17 from Sodalis glossinidius (strain morsitans).